We begin with the raw amino-acid sequence, 270 residues long: Exosome complex component rrp43 (270 aa).

The protein belongs to the RNase PH family. Component of the RNA exosome complex. Specifically part of the catalytically inactive RNA exosome core complex (Exo-9) which may associate with the catalytic subunits rrp66 and dis3 in cytoplasmic- and nuclear-specific RNA exosome complex forms. Exo-9 is formed by a hexameric base ring of RNase PH domain-containing subunits and a cap ring consisting of csl4, rrp4 and rrp40.

Its subcellular location is the cytoplasm. The protein resides in the nucleus. It is found in the nucleolus. Functionally, non-catalytic component of the RNA exosome complex which has 3'-&gt;5' exoribonuclease activity and participates in a multitude of cellular RNA processing and degradation events. In the nucleus, the RNA exosome complex is involved in proper maturation of stable RNA species such as rRNA, snRNA and snoRNA, in the elimination of RNA processing by-products and non-coding 'pervasive' transcripts, such as antisense RNA species and cryptic unstable transcripts (CUTs), and of mRNAs with processing defects, thereby limiting or excluding their export to the cytoplasm. In the cytoplasm, the RNA exosome complex is involved in general mRNA turnover and in RNA surveillance pathways, preventing translation of aberrant mRNAs. The catalytic inactive RNA exosome core complex of 9 subunits (Exo-9) is proposed to play a pivotal role in the binding and presentation of RNA for ribonucleolysis, and to serve as a scaffold for the association with catalytic subunits and accessory proteins or complexes. ski6 is part of the hexameric ring of RNase PH domain-containing subunits proposed to form a central channel which threads RNA substrates for degradation. This is Exosome complex component rrp43 (rrp43) from Schizosaccharomyces pombe (strain 972 / ATCC 24843) (Fission yeast).